Consider the following 118-residue polypeptide: Putative pterin-4-alpha-carbinolamine dehydratase (118 aa).

The protein belongs to the pterin-4-alpha-carbinolamine dehydratase family.

The catalysed reaction is (4aS,6R)-4a-hydroxy-L-erythro-5,6,7,8-tetrahydrobiopterin = (6R)-L-erythro-6,7-dihydrobiopterin + H2O. This chain is Putative pterin-4-alpha-carbinolamine dehydratase, found in Azotobacter vinelandii (strain DJ / ATCC BAA-1303).